The sequence spans 1400 residues: ABC transporter G family member 30 (1400 aa).

N-linked (GlcNAc...) asparagine glycosylation occurs at N116. The region spanning 141 to 414 (LLSEFICSKK…FEEFGFKCPE (274 aa)) is the ABC transporter 1 domain. Residue 174–181 (GPPGCGKT) participates in ATP binding. A glycan (N-linked (GlcNAc...) asparagine) is linked at N472. The ABC transmembrane type-2 1 domain maps to 492–704 (EMLKACSRRE…AEIGLTANEF (213 aa)). The next 7 membrane-spanning stretches (helical) occupy residues 510–530 (FIYL…MTVF), 553–573 (LFRL…RLGV), 582–602 (FYPA…LSVL), 628–648 (FLIL…IAAI), 652–672 (IIAS…FGGF), 679–699 (MPAW…EIGL), and 738–758 (TAFG…VLAL). Residues 808-1053 (VTFQNVQYYI…VIEYFESFSG (246 aa)) form the ABC transporter 2 domain. 845-852 (GVSGAGKT) serves as a coordination point for ATP. N-linked (GlcNAc...) asparagine glycosylation is found at N899 and N1040. One can recognise an ABC transmembrane type-2 2 domain in the interval 1125-1339 (VQLKACLWKQ…VLEGLLSSQY (215 aa)). 7 consecutive transmembrane segments (helical) span residues 1144–1164 (HNIT…LLFW), 1179–1199 (IFGS…AAVI), 1228–1248 (VLIE…IVYP), 1263–1283 (LYSI…MVAL), 1289–1309 (MAVT…GFVI), 1317–1337 (WWIW…LLSS), and 1372–1392 (VVAF…AFFM).

It belongs to the ABC transporter superfamily. ABCG family. PDR (TC 3.A.1.205) subfamily. As to expression, confined to roots. In seeds, mainly expressed in the embryo and, to a lesser extent, in the endosperm.

It is found in the cell membrane. The catalysed reaction is abscisate(out) + ATP + H2O = abscisate(in) + ADP + phosphate + H(+). In terms of biological role, together with ABCG40, import into the embryo the abscisic acid (ABA) delivered from the endosperm via ABCG25 and ABCG31-mediated export to suppress radicle extension and subsequent embryonic growth. Involved in root secretion of phytochemicals (phenolics and sugars) which regulate soil microbiota, influencing both fungal and bacterial communities. May be a general defense protein. The protein is ABC transporter G family member 30 of Arabidopsis thaliana (Mouse-ear cress).